The chain runs to 97 residues: Co-chaperonin GroES (97 aa).

The protein belongs to the GroES chaperonin family. As to quaternary structure, heptamer of 7 subunits arranged in a ring. Interacts with the chaperonin GroEL.

Its subcellular location is the cytoplasm. Its function is as follows. Together with the chaperonin GroEL, plays an essential role in assisting protein folding. The GroEL-GroES system forms a nano-cage that allows encapsulation of the non-native substrate proteins and provides a physical environment optimized to promote and accelerate protein folding. GroES binds to the apical surface of the GroEL ring, thereby capping the opening of the GroEL channel. The sequence is that of Co-chaperonin GroES from Burkholderia cepacia (Pseudomonas cepacia).